The chain runs to 638 residues: Trichohyalin-like protein 1 (638 aa).

Residues 49-84 (HVFHAVERKLNLLNFDRDGTISFEEFVLAIFSLLNP) form the EF-hand domain. A disordered region spans residues 134-638 (SEMASSGQPS…ALEAESLEAQ (505 aa)). Positions 166 to 179 (LPRNVSEPNDPENQ) are enriched in polar residues. Composition is skewed to basic and acidic residues over residues 221 to 246 (IPRE…QRPT), 294 to 309 (DDTK…KDAG), and 318 to 328 (EEPKADAKVAE). Positions 343-357 (DQSVQSRSRNVSETS) are enriched in polar residues. Basic and acidic residues-rich tracts occupy residues 358–372 (SRGE…HERI), 395–409 (REND…KDPS), 419–435 (EIKE…HSEE), 479–490 (RIQDKPVRKEDH), 526–548 (AEPH…KQES), and 622–631 (AGRENRKALE).

Belongs to the S-100 family.

This chain is Trichohyalin-like protein 1 (Tchhl1), found in Mus musculus (Mouse).